Consider the following 173-residue polypeptide: dCTP deaminase (173 aa).

DCTP-binding positions include 97 to 102 and D113; that span reads RSSFAR. E123 functions as the Proton donor/acceptor in the catalytic mechanism. Positions 155 and 162 each coordinate dCTP.

The protein belongs to the dCTP deaminase family. Homotrimer.

It carries out the reaction dCTP + H2O + H(+) = dUTP + NH4(+). Its pathway is pyrimidine metabolism; dUMP biosynthesis; dUMP from dCTP (dUTP route): step 1/2. Catalyzes the deamination of dCTP to dUTP. This Acidianus ambivalens (Desulfurolobus ambivalens) protein is dCTP deaminase.